The primary structure comprises 525 residues: Cobyric acid synthase (525 aa).

One can recognise a GATase cobBQ-type domain in the interval Glu-251–Leu-452. Catalysis depends on Cys-332, which acts as the Nucleophile. His-444 is a catalytic residue.

The protein belongs to the CobB/CobQ family. CobQ subfamily.

It participates in cofactor biosynthesis; adenosylcobalamin biosynthesis. Catalyzes amidations at positions B, D, E, and G on adenosylcobyrinic A,C-diamide. NH(2) groups are provided by glutamine, and one molecule of ATP is hydrogenolyzed for each amidation. This chain is Cobyric acid synthase, found in Pelotomaculum thermopropionicum (strain DSM 13744 / JCM 10971 / SI).